Here is a 240-residue protein sequence, read N- to C-terminus: Uridylate kinase (240 aa).

13-16 (KASG) is an ATP binding site. Residue G55 coordinates UMP. ATP contacts are provided by G56 and R60. Residues D75 and 136 to 143 (TGNPFFTT) contribute to the UMP site. Residues T163, Q164, Y169, and D172 each coordinate ATP.

This sequence belongs to the UMP kinase family. In terms of assembly, homohexamer.

The protein resides in the cytoplasm. The enzyme catalyses UMP + ATP = UDP + ADP. Its pathway is pyrimidine metabolism; CTP biosynthesis via de novo pathway; UDP from UMP (UMPK route): step 1/1. With respect to regulation, inhibited by UTP. Catalyzes the reversible phosphorylation of UMP to UDP. This Mesorhizobium japonicum (strain LMG 29417 / CECT 9101 / MAFF 303099) (Mesorhizobium loti (strain MAFF 303099)) protein is Uridylate kinase.